The following is a 113-amino-acid chain: Large ribosomal subunit protein bL19 (113 aa).

This sequence belongs to the bacterial ribosomal protein bL19 family.

This protein is located at the 30S-50S ribosomal subunit interface and may play a role in the structure and function of the aminoacyl-tRNA binding site. The protein is Large ribosomal subunit protein bL19 of Corynebacterium jeikeium (strain K411).